Reading from the N-terminus, the 215-residue chain is MNMDHSKIPQATAKRLPLYYRFLKNLHASGKQRVSSAELSDAVKVDSATIRRDFSYFGALGKKGYGYNVNYLLSFFRKTLDQDETTNVTLIGVGNLGTAFLHYNFIKNNNTKIAMAFDINEEKIGTEVGGVPVYDLNKLEEHMTDDDIPVAILTVPAQAAQSITDRLVALGIKGILNFTPARLNVPEHIRIHHIDLAVELQSLVYFLKHYSMQEK.

The H-T-H motif DNA-binding region spans 18 to 57 (LYYRFLKNLHASGKQRVSSAELSDAVKVDSATIRRDFSYF). 92 to 97 (GVGNLG) provides a ligand contact to NAD(+).

The protein belongs to the transcriptional regulatory Rex family. Homodimer.

Its subcellular location is the cytoplasm. In terms of biological role, modulates transcription in response to changes in cellular NADH/NAD(+) redox state. The sequence is that of Redox-sensing transcriptional repressor Rex from Bacillus licheniformis (strain ATCC 14580 / DSM 13 / JCM 2505 / CCUG 7422 / NBRC 12200 / NCIMB 9375 / NCTC 10341 / NRRL NRS-1264 / Gibson 46).